A 493-amino-acid chain; its full sequence is MECQRCSASARNPATVESRKEKFCDECFIKFVSTKQRKQMMKDEYFRNLFKVIYPFEKEGSVSKILLPLSLSDSGSLVMLDIVHDLLLEQTKQHNNRTGFTVDVLTVFTEENVSVIKERMESLINEKMSQLNKISNIFNVHFIDVNEFFNNASEVSTFIIDNENFEIFSKSKSVDDSNILTLKEILGKYCLNSSSRSDLISIIKTQLIKHFAYENGYNAIMWGHSMTKLSEVIISLVVKGKGSQIATFLDSESFDTLNNKPCKYKNLYPMKDLLSVEIESFLQIRNLAQFLINVEETNVKPNCLIARKSLPSLGQQKLVKNMTINEITNKYFQDIQNDYSNIISTVLRTADKLTQPKSSMAKPSQCQICQSKIYTNPSNWLNRITVTSPYPVETTEEKYLFKQWQDSKLGQSHTHYVELLNEIKQGASNSLDVEDSDVKLCYGCLILLNTSIKDKNLVWPKVDTMDITANATNKNKELSQILDQFEINSDGEE.

Position 489 is a phosphoserine (Ser-489).

Belongs to the CTU2/NCS2 family. As to quaternary structure, interacts with NCS6 and URM1. May act by forming a heterodimer with NCS6.

It localises to the cytoplasm. Its pathway is tRNA modification; 5-methoxycarbonylmethyl-2-thiouridine-tRNA biosynthesis. Plays a central role in 2-thiolation of mcm(5)S(2)U at tRNA wobble positions of tRNA(Lys), tRNA(Glu) and tRNA(Gln). May act by forming a heterodimer with NCS6 that ligates sulfur from thiocarboxylated URM1 onto the uridine of tRNAs at wobble position. Prior mcm(5) tRNA modification by the elongator complex is required for 2-thiolation. May also be involved in protein urmylation. This Saccharomyces cerevisiae (strain YJM789) (Baker's yeast) protein is Cytoplasmic tRNA 2-thiolation protein 2.